Reading from the N-terminus, the 440-residue chain is GTPase Der (440 aa).

EngA-type G domains lie at 4–168 (PVVA…PPEK) and 177–352 (IKIA…GRHS). Residues 10–17 (GRPNVGKS), 57–61 (DTGGL), 120–123 (NKVE), 183–190 (GRPNVGKS), 230–234 (DTAGM), and 295–298 (NKWD) contribute to the GTP site. In terms of domain architecture, KH-like spans 353–437 (MRISTPGLNA…PIRFVLRKKT (85 aa)).

This sequence belongs to the TRAFAC class TrmE-Era-EngA-EngB-Septin-like GTPase superfamily. EngA (Der) GTPase family. As to quaternary structure, associates with the 50S ribosomal subunit.

In terms of biological role, GTPase that plays an essential role in the late steps of ribosome biogenesis. The sequence is that of GTPase Der from Pelotomaculum thermopropionicum (strain DSM 13744 / JCM 10971 / SI).